Consider the following 151-residue polypeptide: Peptide deformylase (151 aa).

Residues cysteine 88 and histidine 130 each contribute to the Fe cation site. Residue glutamate 131 is part of the active site. Histidine 134 serves as a coordination point for Fe cation.

Belongs to the polypeptide deformylase family. It depends on Fe(2+) as a cofactor.

The catalysed reaction is N-terminal N-formyl-L-methionyl-[peptide] + H2O = N-terminal L-methionyl-[peptide] + formate. Its function is as follows. Removes the formyl group from the N-terminal Met of newly synthesized proteins. Requires at least a dipeptide for an efficient rate of reaction. N-terminal L-methionine is a prerequisite for activity but the enzyme has broad specificity at other positions. The polypeptide is Peptide deformylase (Heliobacterium modesticaldum (strain ATCC 51547 / Ice1)).